The sequence spans 536 residues: Interferon alpha/beta receptor 2 (536 aa).

Positions 1–26 are cleaved as a signal peptide; it reads MLLSQNVSAIGPLNLYPMVHISLVFG. The Extracellular portion of the chain corresponds to 27 to 246; sequence ISYVVPDLSD…RESESSEPAT (220 aa). Disulfide bonds link Cys39–Cys122 and Cys85–Cys93. N-linked (GlcNAc...) asparagine glycans are attached at residues Asn58, Asn87, Asn101, Asn147, and Asn191. A disulfide bridge links Cys210 with Cys230. A helical membrane pass occupies residues 247 to 267; the sequence is IGGILILFLLAAVCISTVMIL. Residues 268-536 lie on the Cytoplasmic side of the membrane; sequence KRIGYICLRN…VRQVNLKNFN (269 aa). Phosphotyrosine is present on Tyr340. 3 consecutive repeat copies span residues 358 to 362, 363 to 367, and 368 to 372. Residues 358-372 form a 3 X 5 AA tandem repeats of S-L-E-D-C region; it reads SLEDCSLEDCSLEDC. A disordered region spans residues 369 to 434; the sequence is LEDCSDPSAE…SDSTEGSEGR (66 aa). Positions 420 to 429 are enriched in acidic residues; it reads TSEEDSDSTE. Positions 432-456 are mediates interaction with STAT2 (and required for the recruitment of USP18); sequence EGRIVFNVNLNSVCVRALEDDKDSE. At Ser480 the chain carries Phosphoserine. A disordered region spans residues 487 to 522; sequence EEGTQLPFTDPSMECLRPQDALSDKSDTSESDVDIG. Position 525 is a phosphotyrosine (Tyr525).

The protein belongs to the type II cytokine receptor family. As to quaternary structure, heterodimer with IFNAR1; forming the receptor for type I interferon. Interacts with the transcriptional factors STAT1 and STAT2. Interacts with JAK1. Interacts with USP18; indirectly via STAT2, it negatively regulates the assembly of the ternary interferon-IFNAR1-IFNAR2 complex and therefore type I interferon signaling. In terms of processing, phosphorylated on tyrosine residues upon interferon binding. Phosphorylation at Tyr-340 or Tyr-525 are sufficient to mediate interferon dependent activation of STAT1, STAT2 and STAT3 leading to antiproliferative effects on many different cell types. In terms of tissue distribution, expressed in the endometrium. Expressed in all tissues examined except conceptus at day 15 of pregnancy.

The protein resides in the cell membrane. Together with IFNAR1, forms the heterodimeric receptor for type I interferons (including interferons alpha, beta, epsilon, omega and kappa). Type I interferon binding activates the JAK-STAT signaling cascade, resulting in transcriptional activation or repression of interferon-regulated genes that encode the effectors of the interferon response. Mechanistically, type I interferon-binding brings the IFNAR1 and IFNAR2 subunits into close proximity with one another, driving their associated Janus kinases (JAKs) (TYK2 bound to IFNAR1 and JAK1 bound to IFNAR2) to cross-phosphorylate one another. The activated kinases phosphorylate specific tyrosine residues on the intracellular domains of IFNAR1 and IFNAR2, forming docking sites for the STAT transcription factors (STAT1, STAT2 and STAT). STAT proteins are then phosphorylated by the JAKs, promoting their translocation into the nucleus to regulate expression of interferon-regulated genes. In Ovis aries (Sheep), this protein is Interferon alpha/beta receptor 2 (IFNAR2).